A 330-amino-acid chain; its full sequence is Anthranilate phosphoribosyltransferase (330 aa).

Residues Gly75, 78–79 (GD), Thr83, 85–88 (NVST), 103–111 (KHGNRAASS), and Ala115 each bind 5-phospho-alpha-D-ribose 1-diphosphate. Gly75 serves as a coordination point for anthranilate. A Mg(2+)-binding site is contributed by Ser87. Asn106 is a binding site for anthranilate. Residue Arg161 coordinates anthranilate. Positions 220 and 221 each coordinate Mg(2+).

The protein belongs to the anthranilate phosphoribosyltransferase family. Homodimer. It depends on Mg(2+) as a cofactor.

The catalysed reaction is N-(5-phospho-beta-D-ribosyl)anthranilate + diphosphate = 5-phospho-alpha-D-ribose 1-diphosphate + anthranilate. Its pathway is amino-acid biosynthesis; L-tryptophan biosynthesis; L-tryptophan from chorismate: step 2/5. In terms of biological role, catalyzes the transfer of the phosphoribosyl group of 5-phosphorylribose-1-pyrophosphate (PRPP) to anthranilate to yield N-(5'-phosphoribosyl)-anthranilate (PRA). The polypeptide is Anthranilate phosphoribosyltransferase (Erythrobacter litoralis (strain HTCC2594)).